A 138-amino-acid polypeptide reads, in one-letter code: Endoribonuclease YbeY (138 aa).

Residues H98, H102, and H108 each contribute to the Zn(2+) site.

It belongs to the endoribonuclease YbeY family. It depends on Zn(2+) as a cofactor.

Its subcellular location is the cytoplasm. Its function is as follows. Single strand-specific metallo-endoribonuclease involved in late-stage 70S ribosome quality control and in maturation of the 3' terminus of the 16S rRNA. The sequence is that of Endoribonuclease YbeY from Thermosipho melanesiensis (strain DSM 12029 / CIP 104789 / BI429).